A 350-amino-acid polypeptide reads, in one-letter code: 3-isopropylmalate dehydrogenase (350 aa).

76–87 (GPKWDNAPKRPE) contacts NAD(+). Residues arginine 94, arginine 104, arginine 132, and aspartate 217 each contribute to the substrate site. Mg(2+) is bound by residues aspartate 217, aspartate 241, and aspartate 245. 275–287 (GSAPDIANQNIAN) contacts NAD(+).

It belongs to the isocitrate and isopropylmalate dehydrogenases family. LeuB type 1 subfamily. Homodimer. Mg(2+) is required as a cofactor. Requires Mn(2+) as cofactor.

It is found in the cytoplasm. It carries out the reaction (2R,3S)-3-isopropylmalate + NAD(+) = 4-methyl-2-oxopentanoate + CO2 + NADH. It functions in the pathway amino-acid biosynthesis; L-leucine biosynthesis; L-leucine from 3-methyl-2-oxobutanoate: step 3/4. In terms of biological role, catalyzes the oxidation of 3-carboxy-2-hydroxy-4-methylpentanoate (3-isopropylmalate) to 3-carboxy-4-methyl-2-oxopentanoate. The product decarboxylates to 4-methyl-2 oxopentanoate. The sequence is that of 3-isopropylmalate dehydrogenase from Listeria monocytogenes serotype 4b (strain F2365).